A 115-amino-acid chain; its full sequence is Cytochrome c (115 aa).

Residues Cys26, Cys29, His30, and Met91 each coordinate heme c.

The protein belongs to the cytochrome c family. In terms of processing, binds 1 heme c group covalently per subunit.

The protein resides in the mitochondrion intermembrane space. Functionally, electron carrier protein. The oxidized form of the cytochrome c heme group can accept an electron from the heme group of the cytochrome c1 subunit of cytochrome reductase. Cytochrome c then transfers this electron to the cytochrome oxidase complex, the final protein carrier in the mitochondrial electron-transport chain. The polypeptide is Cytochrome c (Theileria parva (East coast fever infection agent)).